The sequence spans 392 residues: Phosphopentomutase (392 aa).

Mn(2+) contacts are provided by aspartate 13, aspartate 286, histidine 291, aspartate 327, histidine 328, and histidine 339.

This sequence belongs to the phosphopentomutase family. Mn(2+) serves as cofactor.

The protein resides in the cytoplasm. The catalysed reaction is 2-deoxy-alpha-D-ribose 1-phosphate = 2-deoxy-D-ribose 5-phosphate. The enzyme catalyses alpha-D-ribose 1-phosphate = D-ribose 5-phosphate. Its pathway is carbohydrate degradation; 2-deoxy-D-ribose 1-phosphate degradation; D-glyceraldehyde 3-phosphate and acetaldehyde from 2-deoxy-alpha-D-ribose 1-phosphate: step 1/2. Its function is as follows. Isomerase that catalyzes the conversion of deoxy-ribose 1-phosphate (dRib-1-P) and ribose 1-phosphate (Rib-1-P) to deoxy-ribose 5-phosphate (dRib-5-P) and ribose 5-phosphate (Rib-5-P), respectively. This chain is Phosphopentomutase, found in Oceanobacillus iheyensis (strain DSM 14371 / CIP 107618 / JCM 11309 / KCTC 3954 / HTE831).